We begin with the raw amino-acid sequence, 95 residues long: Histone-like DNA-binding protein (95 aa).

Belongs to the bacterial histone-like protein family.

The protein is Histone-like DNA-binding protein of Rickettsia typhi (strain ATCC VR-144 / Wilmington).